The following is a 328-amino-acid chain: Nickel import system permease protein NikB (328 aa).

6 helical membrane passes run Leu-11–Leu-31, Leu-104–Ile-124, Val-139–Ile-159, Ile-170–Ile-190, Ile-229–Val-249, and Val-279–Leu-299. The ABC transmembrane type-1 domain maps to Ala-100–Thr-297.

The protein belongs to the binding-protein-dependent transport system permease family. OppBC subfamily. In terms of assembly, the complex is composed of two ATP-binding proteins (NikD and NikE), two transmembrane proteins (NikB and NikC) and a solute-binding protein (NikA).

It is found in the cell membrane. Functionally, part of the ABC transporter complex NikABCDE (Opp2) involved in nickel import. Probably responsible for the translocation of the substrate across the membrane. The sequence is that of Nickel import system permease protein NikB from Staphylococcus aureus (strain USA300).